The following is a 67-amino-acid chain: Protein Tpau_2998 (67 aa).

This Tsukamurella paurometabola (strain ATCC 8368 / DSM 20162 / CCUG 35730 / CIP 100753 / JCM 10117 / KCTC 9821 / NBRC 16120 / NCIMB 702349 / NCTC 13040) (Corynebacterium paurometabolum) protein is Protein Tpau_2998.